Here is a 399-residue protein sequence, read N- to C-terminus: Probable protein phosphatase 2C 28 (399 aa).

One can recognise a PPM-type phosphatase domain in the interval 48–356 (EFSMAVVQAN…DDITVIVVFL (309 aa)). The Mn(2+) site is built by Asp87, Gly88, Asp288, and Asp347.

The protein belongs to the PP2C family. Mg(2+) is required as a cofactor. Mn(2+) serves as cofactor.

The enzyme catalyses O-phospho-L-seryl-[protein] + H2O = L-seryl-[protein] + phosphate. The catalysed reaction is O-phospho-L-threonyl-[protein] + H2O = L-threonyl-[protein] + phosphate. In Oryza sativa subsp. japonica (Rice), this protein is Probable protein phosphatase 2C 28.